The chain runs to 25 residues: C-type natriuretic peptide (25 aa).

Cys-9 and Cys-25 are disulfide-bonded.

In terms of tissue distribution, venom gland.

It localises to the secreted. Snake venom natriuretic peptide that has a vasorelaxant activity in rat aortic strips and a diuretic potency in anesthetized rats. May act by activating natriuretic receptors (NPR1 and/or NPR2). The sequence is that of C-type natriuretic peptide from Crotalus atrox (Western diamondback rattlesnake).